Consider the following 396-residue polypeptide: Phosphoglycerate kinase (396 aa).

Residues 21–23, Arg-36, 59–62, Arg-119, and Arg-156 contribute to the substrate site; these read DFN and HLGR. Residues Lys-207, Glu-325, and 352 to 355 each bind ATP; that span reads GGDS.

Belongs to the phosphoglycerate kinase family. Monomer.

The protein resides in the cytoplasm. It carries out the reaction (2R)-3-phosphoglycerate + ATP = (2R)-3-phospho-glyceroyl phosphate + ADP. It functions in the pathway carbohydrate degradation; glycolysis; pyruvate from D-glyceraldehyde 3-phosphate: step 2/5. This is Phosphoglycerate kinase from Lacticaseibacillus casei (strain BL23) (Lactobacillus casei).